The primary structure comprises 551 residues: Hydroxylamine reductase (551 aa).

Cysteine 3, cysteine 6, cysteine 18, and cysteine 25 together coordinate [2Fe-2S] cluster. Histidine 249, glutamate 273, cysteine 317, cysteine 405, cysteine 433, cysteine 459, glutamate 493, and lysine 495 together coordinate hybrid [4Fe-2O-2S] cluster. Cysteine 405 carries the post-translational modification Cysteine persulfide.

The protein belongs to the HCP family. Requires [2Fe-2S] cluster as cofactor. It depends on hybrid [4Fe-2O-2S] cluster as a cofactor.

It is found in the cytoplasm. The catalysed reaction is A + NH4(+) + H2O = hydroxylamine + AH2 + H(+). Catalyzes the reduction of hydroxylamine to form NH(3) and H(2)O. In Actinobacillus pleuropneumoniae serotype 5b (strain L20), this protein is Hydroxylamine reductase.